Here is a 433-residue protein sequence, read N- to C-terminus: Serine hydroxymethyltransferase (433 aa).

Residues L131 and G135–L137 each bind (6S)-5,6,7,8-tetrahydrofolate. An N6-(pyridoxal phosphate)lysine modification is found at K240.

Belongs to the SHMT family. In terms of assembly, homodimer. It depends on pyridoxal 5'-phosphate as a cofactor.

The protein localises to the cytoplasm. It catalyses the reaction (6R)-5,10-methylene-5,6,7,8-tetrahydrofolate + glycine + H2O = (6S)-5,6,7,8-tetrahydrofolate + L-serine. The protein operates within one-carbon metabolism; tetrahydrofolate interconversion. It functions in the pathway amino-acid biosynthesis; glycine biosynthesis; glycine from L-serine: step 1/1. In terms of biological role, catalyzes the reversible interconversion of serine and glycine with tetrahydrofolate (THF) serving as the one-carbon carrier. This reaction serves as the major source of one-carbon groups required for the biosynthesis of purines, thymidylate, methionine, and other important biomolecules. Also exhibits THF-independent aldolase activity toward beta-hydroxyamino acids, producing glycine and aldehydes, via a retro-aldol mechanism. The sequence is that of Serine hydroxymethyltransferase from Bifidobacterium adolescentis (strain ATCC 15703 / DSM 20083 / NCTC 11814 / E194a).